The sequence spans 221 residues: Peroxiredoxin 2 (221 aa).

A Thioredoxin domain is found at 15–170 (PQIGAPAPDF…IIRIIDALQT (156 aa)). Cysteine 56 (cysteine sulfenic acid (-SOH) intermediate) is an active-site residue. Residue arginine 133 participates in substrate binding. Cysteine 211 and cysteine 217 are disulfide-bonded.

The protein belongs to the peroxiredoxin family. Prx6 subfamily. Homodecamer. Pentamer of dimers that assemble into a ring structure.

It is found in the cytoplasm. The catalysed reaction is a hydroperoxide + [thioredoxin]-dithiol = an alcohol + [thioredoxin]-disulfide + H2O. Thiol-specific peroxidase that catalyzes the reduction of hydrogen peroxide and organic hydroperoxides to water and alcohols, respectively. Plays a role in cell protection against oxidative stress by detoxifying peroxides. The protein is Peroxiredoxin 2 of Caldanaerobacter subterraneus subsp. tengcongensis (strain DSM 15242 / JCM 11007 / NBRC 100824 / MB4) (Thermoanaerobacter tengcongensis).